Reading from the N-terminus, the 103-residue chain is Cell division suppressor protein YneA (103 aa).

Positions 36–87 (VKIEVQEGDTLWELADRIKGGKTADKHKFIEWVADKNNLPTSVIKPGDVLIL) constitute a LysM domain.

The protein belongs to the YneA family.

It localises to the cytoplasm. Inhibits cell division during the SOS response. Affects a later stage of the cell division protein assembly, after the assembly of the Z ring, by probably suppressing recruitment of FtsL and/or DivIC to the division machinery. The polypeptide is Cell division suppressor protein YneA (Bacillus licheniformis (strain ATCC 14580 / DSM 13 / JCM 2505 / CCUG 7422 / NBRC 12200 / NCIMB 9375 / NCTC 10341 / NRRL NRS-1264 / Gibson 46)).